Reading from the N-terminus, the 901-residue chain is Disease resistance RPP8-like protein 3 (901 aa).

Positions 15-56 form a coiled coil; the sequence is ALLNRESERLNGIDEQVDGLKRQLRGLQSLLKDADAKKHGSD. The region spanning 144–453 is the NB-ARC domain; it reads LQDIQREIRQ…AEGIYDGLTI (310 aa). ATP is bound by residues 190–197 and 385–392; these read GMGGIGKT and GAQIVGKS. 3 LRR repeats span residues 567–591, 592–615, and 833–858; these read LPLL…SIGG, LIHL…IRNL, and MPCL…KYVT.

The protein belongs to the disease resistance NB-LRR family. RPP8/HRT subfamily.

Functionally, disease resistance protein. The chain is Disease resistance RPP8-like protein 3 (RPP8L3) from Arabidopsis thaliana (Mouse-ear cress).